A 300-amino-acid polypeptide reads, in one-letter code: Ribosomal protein bS6--L-glutamate ligase (300 aa).

Residues Leu-104 to Glu-287 enclose the ATP-grasp domain. ATP is bound by residues Lys-141, Glu-178–Tyr-179, Asp-187, and Arg-211–Asn-213. Residues Asp-248, Glu-260, and Asn-262 each contribute to the Mg(2+) site. 3 residues coordinate Mn(2+): Asp-248, Glu-260, and Asn-262.

This sequence belongs to the RimK family. Requires Mg(2+) as cofactor. It depends on Mn(2+) as a cofactor.

Its function is as follows. An L-glutamate ligase that catalyzes the ATP-dependent post-translational addition of glutamate residues to the C-terminus of ribosomal protein bS6 (RpsF). Is also able to catalyze the synthesis of poly-alpha-glutamate in vitro, via ATP hydrolysis from unprotected glutamate as substrate. The number of glutamate residues added to either RpsF or to poly-alpha-glutamate changes with pH. This chain is Ribosomal protein bS6--L-glutamate ligase, found in Salmonella agona (strain SL483).